The sequence spans 182 residues: ATP-dependent protease subunit HslV (182 aa).

The active site involves Thr-12. Na(+)-binding residues include Ala-167, Cys-170, and Thr-173.

Belongs to the peptidase T1B family. HslV subfamily. As to quaternary structure, a double ring-shaped homohexamer of HslV is capped on each side by a ring-shaped HslU homohexamer. The assembly of the HslU/HslV complex is dependent on binding of ATP.

The protein resides in the cytoplasm. It carries out the reaction ATP-dependent cleavage of peptide bonds with broad specificity.. With respect to regulation, allosterically activated by HslU binding. Functionally, protease subunit of a proteasome-like degradation complex believed to be a general protein degrading machinery. The sequence is that of ATP-dependent protease subunit HslV from Chlorobium phaeobacteroides (strain BS1).